Reading from the N-terminus, the 135-residue chain is Large ribosomal subunit protein uL16c (135 aa).

It belongs to the universal ribosomal protein uL16 family. As to quaternary structure, part of the 50S ribosomal subunit.

It is found in the plastid. The protein localises to the chloroplast. The chain is Large ribosomal subunit protein uL16c from Gossypium barbadense (Sea Island cotton).